Here is a 70-residue protein sequence, read N- to C-terminus: Movement protein TGBp3 (70 aa).

Over 1-4 (MEAG) the chain is Lumenal. The chain crosses the membrane as a helical span at residues 5–27 (AYLNAIIFVLVATIIAVISRGLT). Topologically, residues 28–70 (RTEPCTIRITGESITVHACHIDSETIKALANLKPLSLERLSFQ) are cytoplasmic.

The protein belongs to the Tymovirales TGBp3 protein family.

The protein resides in the host endoplasmic reticulum membrane. Its function is as follows. Plays a role in viral cell-to-cell propagation, by facilitating genome transport to neighboring plant cells through plasmosdesmata. May induce the formation of granular vesicles derived from the Endoplasmic reticulum, which align on actin filaments. The chain is Movement protein TGBp3 from Potato virus X (strain CP) (PVX).